Here is a 339-residue protein sequence, read N- to C-terminus: Anthranilate phosphoribosyltransferase (339 aa).

5-phospho-alpha-D-ribose 1-diphosphate is bound by residues G79, 82–83 (GD), S87, 89–92 (NIST), 107–115 (KHGNRSISS), and S119. Position 79 (G79) interacts with anthranilate. Residue S91 participates in Mg(2+) binding. Residue N110 participates in anthranilate binding. Position 165 (R165) interacts with anthranilate. The Mg(2+) site is built by D224 and E225.

This sequence belongs to the anthranilate phosphoribosyltransferase family. In terms of assembly, homodimer. It depends on Mg(2+) as a cofactor.

The catalysed reaction is N-(5-phospho-beta-D-ribosyl)anthranilate + diphosphate = 5-phospho-alpha-D-ribose 1-diphosphate + anthranilate. The protein operates within amino-acid biosynthesis; L-tryptophan biosynthesis; L-tryptophan from chorismate: step 2/5. Its function is as follows. Catalyzes the transfer of the phosphoribosyl group of 5-phosphorylribose-1-pyrophosphate (PRPP) to anthranilate to yield N-(5'-phosphoribosyl)-anthranilate (PRA). This is Anthranilate phosphoribosyltransferase from Listeria monocytogenes serovar 1/2a (strain ATCC BAA-679 / EGD-e).